Here is an 85-residue protein sequence, read N- to C-terminus: U4-theraphotoxin-Hhn1a (85 aa).

The first 22 residues, 1-22, serve as a signal peptide directing secretion; the sequence is MKVTLIAILTCAAALVLHTTAA. Residues 23–48 constitute a propeptide that is removed on maturation; the sequence is EELEAESQLMEVGMPDTELAAVDEER. 3 cysteine pairs are disulfide-bonded: Cys-52–Cys-66, Cys-56–Cys-77, and Cys-71–Cys-82.

Belongs to the neurotoxin 12 (Hwtx-2) family. 02 (Hwtx-2) subfamily. In terms of assembly, monomer. Expressed by the venom gland.

The protein localises to the secreted. In terms of biological role, neurotoxin active on both insects and mammals. This chain is U4-theraphotoxin-Hhn1a, found in Cyriopagopus hainanus (Chinese bird spider).